Reading from the N-terminus, the 359-residue chain is Nicotinate-nucleotide--dimethylbenzimidazole phosphoribosyltransferase (359 aa).

Catalysis depends on Glu-318, which acts as the Proton acceptor.

It belongs to the CobT family. Homodimer.

It carries out the reaction 5,6-dimethylbenzimidazole + nicotinate beta-D-ribonucleotide = alpha-ribazole 5'-phosphate + nicotinate + H(+). The protein operates within nucleoside biosynthesis; alpha-ribazole biosynthesis; alpha-ribazole from 5,6-dimethylbenzimidazole: step 1/2. Functionally, catalyzes the synthesis of alpha-ribazole-5'-phosphate from nicotinate mononucleotide (NAMN) and 5,6-dimethylbenzimidazole (DMB). This is Nicotinate-nucleotide--dimethylbenzimidazole phosphoribosyltransferase from Escherichia coli (strain ATCC 8739 / DSM 1576 / NBRC 3972 / NCIMB 8545 / WDCM 00012 / Crooks).